The primary structure comprises 570 residues: Dual specificity testis-specific protein kinase 2 (570 aa).

One can recognise a Protein kinase domain in the interval 58-313 (DFTREKIGSG…EIGKTLKEIM (256 aa)). Residues 64–72 (IGSGFFSEV) and lysine 87 contribute to the ATP site. Aspartate 176 serves as the catalytic Proton acceptor. Serine 219 is modified (phosphoserine; by autocatalysis). Positions 316–327 (LPEEELERDRKL) are enriched in basic and acidic residues. Positions 316-357 (LPEEELERDRKLQPTAKGPLEKVPGGKRLSSLDDKIPHKSPR) are disordered. Serine 369, serine 456, and serine 460 each carry phosphoserine. The interval 511–530 (AMDCSNPQEENGFGPRLKGT) is disordered.

The protein belongs to the protein kinase superfamily. TKL Ser/Thr protein kinase family. Mg(2+) is required as a cofactor. Requires Mn(2+) as cofactor.

It localises to the nucleus. It catalyses the reaction L-seryl-[protein] + ATP = O-phospho-L-seryl-[protein] + ADP + H(+). The catalysed reaction is L-threonyl-[protein] + ATP = O-phospho-L-threonyl-[protein] + ADP + H(+). It carries out the reaction L-tyrosyl-[protein] + ATP = O-phospho-L-tyrosyl-[protein] + ADP + H(+). Its activity is regulated as follows. Activated by autophosphorylation on Ser-219. Its function is as follows. Dual specificity protein kinase activity catalyzing autophosphorylation and phosphorylation of exogenous substrates on both serine/threonine and tyrosine residues. Phosphorylates cofilin at 'Ser-3'. May play an important role in spermatogenesis. The protein is Dual specificity testis-specific protein kinase 2 (Tesk2) of Mus musculus (Mouse).